Reading from the N-terminus, the 182-residue chain is Large ribosomal subunit protein uL16 (182 aa).

This sequence belongs to the universal ribosomal protein uL16 family. Part of the 50S ribosomal subunit.

In Thermococcus kodakarensis (strain ATCC BAA-918 / JCM 12380 / KOD1) (Pyrococcus kodakaraensis (strain KOD1)), this protein is Large ribosomal subunit protein uL16.